The chain runs to 254 residues: MDTDKLLSKDLLSNGILLKGLKELGINEKAHNKLSKLLNIYMRELKMFNASFNLVKVKDDEELIVAHILDSLSAWRFFYNETKNTESKTSLNNAETKNTNEALLTSEPFYIADAGTGAGFPGVPLAALFISLGNLDVKLSLIERMQKRCTFLENIKAVLQLNNTEIIESEAEKAPQNKFDIVTCRAFHTLDKHILQTLLNLAKPKGKLFLYKAAKEKINEETELIKKEGLNYKTEKLDVPFLKKERHLLIIEKP.

The insert stretch occupies residues 84-109 (NTESKTSLNNAETKNTNEALLTSEPF). S-adenosyl-L-methionine contacts are provided by residues G115, F120, 171–172 (AE), and R185.

This sequence belongs to the methyltransferase superfamily. RNA methyltransferase RsmG family.

The protein resides in the cytoplasm. Its function is as follows. Specifically methylates the N7 position of a guanine in 16S rRNA. The sequence is that of Ribosomal RNA small subunit methyltransferase G from Treponema denticola (strain ATCC 35405 / DSM 14222 / CIP 103919 / JCM 8153 / KCTC 15104).